A 152-amino-acid chain; its full sequence is MSTTPIVSGVTSQNNSSENVSNNARSLTLKERASKILSSTAFKVGLAVVGIFLVILSIVLLFILPATAASNPIYLAIPAILGCVNICIGILSMNKGSCSEAKWKLCKNVLKTSEDILDDGELNNSNKIFTDDNLSRVEDIVITLSSRRNSVA.

Polar residues predominate over residues 1–11 (MSTTPIVSGVT). A disordered region spans residues 1–21 (MSTTPIVSGVTSQNNSSENVS). Over residues 12–21 (SQNNSSENVS) the composition is skewed to low complexity. Helical transmembrane passes span 44–64 (VGLA…LFIL) and 73–93 (IYLA…ILSM).

The protein resides in the membrane. This chain is Sulfur-rich protein (srp), found in Chlamydia muridarum (strain MoPn / Nigg).